Here is a 638-residue protein sequence, read N- to C-terminus: Threonine--tRNA ligase (638 aa).

In terms of domain architecture, TGS spans 1–61; the sequence is MPEITLPDGS…DNDSKVVIIT (61 aa). Residues 242–533 form a catalytic region; it reads DHRKLGKKHS…LIEQYEAKFP (292 aa). 3 residues coordinate Zn(2+): cysteine 333, histidine 384, and histidine 510.

It belongs to the class-II aminoacyl-tRNA synthetase family. In terms of assembly, homodimer. The cofactor is Zn(2+).

The protein resides in the cytoplasm. The catalysed reaction is tRNA(Thr) + L-threonine + ATP = L-threonyl-tRNA(Thr) + AMP + diphosphate + H(+). Catalyzes the attachment of threonine to tRNA(Thr) in a two-step reaction: L-threonine is first activated by ATP to form Thr-AMP and then transferred to the acceptor end of tRNA(Thr). Also edits incorrectly charged L-seryl-tRNA(Thr). This chain is Threonine--tRNA ligase, found in Prochlorococcus marinus subsp. pastoris (strain CCMP1986 / NIES-2087 / MED4).